A 1367-amino-acid chain; its full sequence is Paired amphipathic helix protein Sin3-like 2 (1367 aa).

The interval 14-44 is disordered; sequence QFKRPLGSSRGESYEQSPITGGGSIGEGGIN. A compositionally biased stretch (gly residues) spans 33-42; the sequence is TGGGSIGEGG. PAH domains follow at residues 46 to 116 and 130 to 200; these read QKLT…LPKG and KTVE…LPDS. The disordered stretch occupies residues 212–322; the sequence is SQAQRYDDRG…EAYSGPASHS (111 aa). Basic and acidic residues-rich tracts occupy residues 230–286 and 299–311; these read MFME…SRDL and FSEK…RMEG. The PAH 3 domain maps to 327–396; it reads LKSMYNQAFL…DEFNQFFERC (70 aa). Disordered stretches follow at residues 417-446, 786-883, 912-946, and 958-1031; these read EENL…KERS, DVHA…LSKP, QSDT…DSED, and ATAK…EGME. Basic and acidic residues-rich tracts occupy residues 424 to 446 and 806 to 819; these read VKGE…KERS and SSGK…DLAN. 2 stretches are compositionally biased toward polar residues: residues 851–876 and 912–923; these read ATSS…SSGS and QSDTSKANSNYD. Over residues 958–967 the composition is skewed to basic and acidic residues; the sequence is ATAKTEHSVE. Composition is skewed to acidic residues over residues 968–989 and 997–1016; these read AEGE…EAGE and IGDE…EHDE. Position 1023 is a phosphoserine (S1023).

It localises to the nucleus. Its function is as follows. Acts as a transcriptional repressor. Plays roles in regulating gene expression and genome stability. In Arabidopsis thaliana (Mouse-ear cress), this protein is Paired amphipathic helix protein Sin3-like 2 (SNL2).